The following is a 191-amino-acid chain: A-type ATP synthase subunit E (191 aa).

It belongs to the V-ATPase E subunit family. Has multiple subunits with at least A(3), B(3), C, D, E, F, H, I and proteolipid K(x). In terms of processing, the N-terminus is blocked.

The protein localises to the cell membrane. Its function is as follows. Component of the A-type ATP synthase that produces ATP from ADP in the presence of a proton gradient across the membrane. The sequence is that of A-type ATP synthase subunit E from Sulfurisphaera tokodaii (strain DSM 16993 / JCM 10545 / NBRC 100140 / 7) (Sulfolobus tokodaii).